We begin with the raw amino-acid sequence, 464 residues long: Kynurenine 3-monooxygenase (464 aa).

Belongs to the aromatic-ring hydroxylase family. KMO subfamily. FAD serves as cofactor.

The enzyme catalyses L-kynurenine + NADPH + O2 + H(+) = 3-hydroxy-L-kynurenine + NADP(+) + H2O. Its pathway is cofactor biosynthesis; NAD(+) biosynthesis; quinolinate from L-kynurenine: step 1/3. Its function is as follows. Catalyzes the hydroxylation of L-kynurenine (L-Kyn) to form 3-hydroxy-L-kynurenine (L-3OHKyn). Required for synthesis of quinolinic acid. The sequence is that of Kynurenine 3-monooxygenase from Myxococcus xanthus (strain DK1622).